We begin with the raw amino-acid sequence, 425 residues long: Sensor histidine kinase NarS (425 aa).

The next 6 helical transmembrane spans lie at 42 to 62 (IASV…VVGT), 71 to 91 (IVLI…AYSA), 107 to 127 (LEPF…QLLS), 130 to 150 (GIYP…DVST), 155 to 175 (VVLA…PVML), and 181 to 201 (PETI…LMVV). The region spanning 224–425 (QTMTASEVLQ…HVCVELPLKR (202 aa)) is the Histidine kinase domain. Histidine 241 is modified (phosphohistidine; by autocatalysis).

In terms of processing, autophosphorylated on His-241.

The protein resides in the cell membrane. It catalyses the reaction ATP + protein L-histidine = ADP + protein N-phospho-L-histidine.. Its function is as follows. Member of the two-component regulatory system NarS/NarL involved in gene expression during aerobic nitrate metabolism. Plays therefore a crucial role in anaerobic survival of mycobacteria in host. Functions as a sensor protein kinase which is autophosphorylated at a histidine residue and transfers its phosphate group to the conserved aspartic acid residue in the regulatory domain of NarL. In turn, NarL binds to the upstream promoter regions of target genes to regulate their expression during aerobic nitrate metabolism. In Mycobacterium tuberculosis (strain ATCC 25618 / H37Rv), this protein is Sensor histidine kinase NarS.